A 184-amino-acid polypeptide reads, in one-letter code: MMKLMFASDIHGSLPATERVLELFAQSGAQWLVILGDVLNHGPRNALPEGYAPAKVAERLNEVAHKVIAVRGNCDSEVDQMLLHFPITAPWQQVLLEKQRLFLTHGHLFGPENLPALNQNDVLVYGHTHLPVAEQRGEIFHFNPGSVSIPKGGNPASYGMLDNDVLSVIALNDQSIIAQVAINP.

Residues D9, H11, D37, N73, H105, H127, and H129 each coordinate Mn(2+).

This sequence belongs to the metallophosphoesterase superfamily. YfcE family. Requires Mn(2+) as cofactor.

In terms of biological role, shows phosphodiesterase activity. In Escherichia coli O157:H7, this protein is Phosphodiesterase YfcE (yfcE).